A 518-amino-acid polypeptide reads, in one-letter code: MSIAVLDRPMSRQDTPSASSVPSACDCMLEVRGVGKSFPGVVALDDVRLRVRRGTVHALMGENGAGKSTLMKIIAGVHAPDRGEIRLKGEPVVLHGPLDALNRGIAMIHQELNLMPYMTVAENIWIRREPRNRCGLVDHAELRRRTQALFARLAIDIDPEAEVRTLTVASRQMVEIAKAVSFDSEVLIMDEPTSALSDVEVHHLFRIIRQLREQGKGIVYITHKMDELFEIADEFSVFRDGKSIGTHAASDVTRDDIIRMMVGREITQMFPKADVPIGDVVLSVKNLCLHGVFRDVSFDLRAGEILGVAGLVGSGRSNVAEALFGVVPASSGEIRLDGERVSIRTPAQAMRYGMAFLTEDRKDTGCFLNLDLLANMEAAVLQRHYMTCGFVRRGALKQDCEAMSRTLRVKSPGLHEEIQNLSGGNQQKVLIGRWLLTHPRILILDEPTRGIDVGAKAEIHRLVSALAGEGVAVLMISSEMPEVLGMSDRIMVMHEGRVTGIVDRKDASQVRVMELASR.

The disordered stretch occupies residues 1–22; the sequence is MSIAVLDRPMSRQDTPSASSVP. Polar residues predominate over residues 12-22; that stretch reads RQDTPSASSVP. ABC transporter domains lie at 29–265 and 275–515; these read LEVR…VGRE and VPIG…VMEL. ATP is bound at residue 61–68; the sequence is GENGAGKS.

The protein belongs to the ABC transporter superfamily. Carbohydrate importer 2 (CUT2) (TC 3.A.1.2) family.

Its subcellular location is the cell inner membrane. The catalysed reaction is D-ribose(out) + ATP + H2O = D-ribose(in) + ADP + phosphate + H(+). The enzyme catalyses D-galactose(out) + ATP + H2O = D-galactose(in) + ADP + phosphate + H(+). Part of an ABC transporter complex involved in carbohydrate import. Could be involved in ribose, galactose and/or methyl galactoside import. Responsible for energy coupling to the transport system. This chain is Putative ribose/galactose/methyl galactoside import ATP-binding protein, found in Ralstonia nicotianae (strain ATCC BAA-1114 / GMI1000) (Ralstonia solanacearum).